A 151-amino-acid polypeptide reads, in one-letter code: Large ribosomal subunit protein bL9 (151 aa).

It belongs to the bacterial ribosomal protein bL9 family.

Binds to the 23S rRNA. This chain is Large ribosomal subunit protein bL9, found in Kosmotoga olearia (strain ATCC BAA-1733 / DSM 21960 / TBF 19.5.1).